The following is a 340-amino-acid chain: NADH-quinone oxidoreductase subunit H (340 aa).

Helical transmembrane passes span 3–23 (LVGM…LVYM), 69–89 (WAFF…WAVI), 102–122 (VVVM…VLAI), 127–147 (VYGI…LGAI), 154–174 (ISYE…AGSL), 186–206 (MPYW…VSML), 248–268 (ILVS…PLNI), 274–294 (IPGF…FIWV), and 312–332 (KVFL…LLWV).

It belongs to the complex I subunit 1 family. As to quaternary structure, NDH-1 is composed of 14 different subunits. Subunits NuoA, H, J, K, L, M, N constitute the membrane sector of the complex.

The protein localises to the cell inner membrane. It carries out the reaction a quinone + NADH + 5 H(+)(in) = a quinol + NAD(+) + 4 H(+)(out). Its function is as follows. NDH-1 shuttles electrons from NADH, via FMN and iron-sulfur (Fe-S) centers, to quinones in the respiratory chain. The immediate electron acceptor for the enzyme in this species is believed to be ubiquinone. Couples the redox reaction to proton translocation (for every two electrons transferred, four hydrogen ions are translocated across the cytoplasmic membrane), and thus conserves the redox energy in a proton gradient. This subunit may bind ubiquinone. The sequence is that of NADH-quinone oxidoreductase subunit H from Anaplasma phagocytophilum (strain HZ).